The primary structure comprises 146 residues: uncharacterized protein (146 aa).

Residues 1-26 form the signal peptide; the sequence is MQFRPSIALVLSIVGILSLEISWTDG.

Prismatic layer of shell (at protein level). Expressed primarily in the mantle with highest level in the mantle edge and lower level in the mantle pallium.

It is found in the secreted. This is an uncharacterized protein from Margaritifera margaritifera (Freshwater pearl mussel).